The following is a 416-amino-acid chain: Cell division control protein 3 (416 aa).

In terms of domain architecture, Septin-type G spans 32-307 (RGFSLNIMAI…ENYRTEKLKR (276 aa)). The segment at 42-49 (GESGLGKA) is G1 motif. GTP-binding positions include 42–49 (GESGLGKA), serine 79, glycine 105, 184–192 (KSDTLTDEE), glycine 240, and arginine 256. Residues 102–105 (TAPG) are G3 motif. The interval 183 to 186 (AKSD) is G4 motif. Positions 323–399 (AAKQEEERAL…QLEKQKLLPQ (77 aa)) form a coiled coil. The interval 392–416 (EKQKLLPQDPPAQPAPQKSRKGFLR) is disordered.

This sequence belongs to the TRAFAC class TrmE-Era-EngA-EngB-Septin-like GTPase superfamily. Septin GTPase family.

The protein localises to the bud neck. Functionally, plays a role in the cell cycle. Involved in the formation of the ring of filaments in the neck region at the mother-bud junction during mitosis. The polypeptide is Cell division control protein 3 (CDC3) (Candida albicans (Yeast)).